A 37-amino-acid chain; its full sequence is Myo-inositol-binding protein (37 aa).

This sequence belongs to the bacterial solute-binding protein 2 family.

The protein localises to the periplasm. The sequence is that of Myo-inositol-binding protein from Pseudomonas sp.